The sequence spans 298 residues: uncharacterized protein (298 aa).

Residues 5–62 (TSLSAMRIFEAAARLGSFRAAAEELNLSPSAVSHAIMRLERDLGVALFERTTRSVSLT) form the HTH lysR-type domain. Positions 22–42 (FRAAAEELNLSPSAVSHAIMR) form a DNA-binding region, H-T-H motif.

Belongs to the LysR transcriptional regulatory family.

This is an uncharacterized protein from Sinorhizobium fredii (strain NBRC 101917 / NGR234).